A 71-amino-acid polypeptide reads, in one-letter code: Small ribosomal subunit protein bS21 (71 aa).

It belongs to the bacterial ribosomal protein bS21 family.

The polypeptide is Small ribosomal subunit protein bS21 (Chromohalobacter salexigens (strain ATCC BAA-138 / DSM 3043 / CIP 106854 / NCIMB 13768 / 1H11)).